The chain runs to 892 residues: Phenylalanine--tRNA ligase beta subunit (892 aa).

In terms of domain architecture, tRNA-binding spans 39–150; it reads NPGVEGVVVG…PGLEPGMDVA (112 aa). One can recognise a B5 domain in the interval 406–569; it reads AVPPVILLRT…RCEGYDAIPL (164 aa). Residues 442–518 are insert; that stretch reads VLTPADLAAD…ALLGGGESDG (77 aa). D547, D553, E556, and E557 together coordinate Mg(2+). Residues 799 to 891 form the FDX-ACB domain; that stretch reads PRFPAVTRDV…ALKALGAELR (93 aa).

It belongs to the phenylalanyl-tRNA synthetase beta subunit family. Type 1 subfamily. As to quaternary structure, tetramer of two alpha and two beta subunits. The cofactor is Mg(2+).

It localises to the cytoplasm. It catalyses the reaction tRNA(Phe) + L-phenylalanine + ATP = L-phenylalanyl-tRNA(Phe) + AMP + diphosphate + H(+). The sequence is that of Phenylalanine--tRNA ligase beta subunit from Symbiobacterium thermophilum (strain DSM 24528 / JCM 14929 / IAM 14863 / T).